Here is a 201-residue protein sequence, read N- to C-terminus: 3-isopropylmalate dehydratase small subunit (201 aa).

Belongs to the LeuD family. LeuD type 1 subfamily. Heterodimer of LeuC and LeuD.

The enzyme catalyses (2R,3S)-3-isopropylmalate = (2S)-2-isopropylmalate. It participates in amino-acid biosynthesis; L-leucine biosynthesis; L-leucine from 3-methyl-2-oxobutanoate: step 2/4. Its function is as follows. Catalyzes the isomerization between 2-isopropylmalate and 3-isopropylmalate, via the formation of 2-isopropylmaleate. The sequence is that of 3-isopropylmalate dehydratase small subunit from Brucella anthropi (strain ATCC 49188 / DSM 6882 / CCUG 24695 / JCM 21032 / LMG 3331 / NBRC 15819 / NCTC 12168 / Alc 37) (Ochrobactrum anthropi).